We begin with the raw amino-acid sequence, 295 residues long: Bifunctional protein FolD (295 aa).

Residues 166–168 (GRS), Ser-195, and Ile-236 contribute to the NADP(+) site.

Belongs to the tetrahydrofolate dehydrogenase/cyclohydrolase family. As to quaternary structure, homodimer.

It catalyses the reaction (6R)-5,10-methylene-5,6,7,8-tetrahydrofolate + NADP(+) = (6R)-5,10-methenyltetrahydrofolate + NADPH. The catalysed reaction is (6R)-5,10-methenyltetrahydrofolate + H2O = (6R)-10-formyltetrahydrofolate + H(+). It functions in the pathway one-carbon metabolism; tetrahydrofolate interconversion. Its function is as follows. Catalyzes the oxidation of 5,10-methylenetetrahydrofolate to 5,10-methenyltetrahydrofolate and then the hydrolysis of 5,10-methenyltetrahydrofolate to 10-formyltetrahydrofolate. The chain is Bifunctional protein FolD from Pelodictyon phaeoclathratiforme (strain DSM 5477 / BU-1).